The sequence spans 573 residues: MLLKNIKISNDYNIFMIIASRKPSLKDIYKIIKVSKFDEPADLIIEDASYIDIYTKRISSGNIAIASGRIAYIGDEMPLKNNDTRIIKNDFLIAPGYIEGHAHPFQIYNPVTFNEIMIRHGTSMVISDDLPIYIKMGLKNIKRFMRFMGRLPVKNFWSVRLDSQSMIDMEKFSYIKIKELLNDDYVLQAGEITGWPYIINMEKNMLKNIYNSQFLGKRIETHNPGASKNTLNRMAAAGITSDHEAITGEDVKTRLSLGYHVFLRYSSIRKDLKDELKYIIDEKLPLNRLMLTNDGSPYYNDYMGMDDLIKIAISTGLNPFDAYSMASLNPAVYYNIDGIYGGIAPGRLADMNFIRDLYNPEPVFLMLDGKIIDKEVKLDPPDWKGYGMLYKNRNIDINKINFNGSDETLFMRNQVIMDLNKYKMEDSMEIHLITKDLKRIVSSNIHGMGQFDALASSYNIEGSYIVIGSSHDLMKKALKEVIKNGGIVFNGNKNIRIELKILGIMSDKHSDDVRNITEEFRSTMRGSGYKFDDPVYSMLFLNSINLPYYRITSSGIVEVKTRKIIKKPVSLKI.

It belongs to the metallo-dependent hydrolases superfamily. Adenine deaminase family.

It carries out the reaction adenine + H2O + H(+) = hypoxanthine + NH4(+). The chain is Putative adenine deaminase PTO1085 from Picrophilus torridus (strain ATCC 700027 / DSM 9790 / JCM 10055 / NBRC 100828 / KAW 2/3).